We begin with the raw amino-acid sequence, 594 residues long: Laccase-2 (594 aa).

The signal sequence occupies residues 1–20 (MGGIIKLSFLFCSLISLVNS). The N-linked (GlcNAc...) asparagine glycan is linked to Asn-67. 2 consecutive Plastocyanin-like domains span residues 70–183 (EALA…HSPN) and 195–357 (DRIV…RYTG). 2 residues coordinate Cu cation: His-117 and His-119. The N-linked (GlcNAc...) asparagine glycan is linked to Asn-124. Residues Cys-138 and Cys-578 are joined by a disulfide bond. Residues His-162 and His-164 each coordinate Cu cation. Residues Asn-242, Asn-286, Asn-320, Asn-358, Asn-397, Asn-430, Asn-452, and Asn-458 are each glycosylated (N-linked (GlcNAc...) asparagine). A Plastocyanin-like 3 domain is found at 466 to 563 (PVNIIINNLD…KMAVVVVQPE (98 aa)). His-480, His-483, and His-485 together coordinate Cu cation. N-linked (GlcNAc...) asparagine glycosylation occurs at Asn-508. Positions 543, 544, 545, and 549 each coordinate Cu cation.

This sequence belongs to the multicopper oxidase family. Requires Cu cation as cofactor.

Its subcellular location is the secreted. The protein localises to the cell wall. The catalysed reaction is 4 hydroquinone + O2 = 4 benzosemiquinone + 2 H2O. Its function is as follows. Laccase that catalyzes the oxidation of certain aromatic compounds, including L-dopa, to quinones, which then polymerize to melanin. Able to oxidize a wide variety of aromatic diphenol and diamino groups in the ortho, meta, and para positions but not monophenolic groups such as in phenol, tyramine, or tyrosine. Plays an important role in virulence. Plays a role in dissemination to extrapulmonary sites but is not involved in pulmonary growth or in elicitation of cellular immune responses in the lung. The chain is Laccase-2 (LAC2) from Cryptococcus neoformans var. grubii serotype A (strain H99 / ATCC 208821 / CBS 10515 / FGSC 9487) (Filobasidiella neoformans var. grubii).